The sequence spans 204 residues: Protein GrpE (204 aa).

The interval 1 to 55 is disordered; it reads MSSKNNPESETKAKNKWEKVMEAEEEQEEGRGDGSQEMEPHREGLEFPSREKLEG. 2 stretches are compositionally biased toward basic and acidic residues: residues 7-22 and 29-55; these read PESE…KVME and EGRG…KLEG.

The protein belongs to the GrpE family. In terms of assembly, homodimer.

The protein localises to the cytoplasm. Participates actively in the response to hyperosmotic and heat shock by preventing the aggregation of stress-denatured proteins, in association with DnaK and GrpE. It is the nucleotide exchange factor for DnaK and may function as a thermosensor. Unfolded proteins bind initially to DnaJ; upon interaction with the DnaJ-bound protein, DnaK hydrolyzes its bound ATP, resulting in the formation of a stable complex. GrpE releases ADP from DnaK; ATP binding to DnaK triggers the release of the substrate protein, thus completing the reaction cycle. Several rounds of ATP-dependent interactions between DnaJ, DnaK and GrpE are required for fully efficient folding. This Coxiella burnetii (strain RSA 331 / Henzerling II) protein is Protein GrpE.